Here is a 127-residue protein sequence, read N- to C-terminus: Protein ApaG (127 aa).

An ApaG domain is found at 3 to 127; sequence DDPRYRVEVE…FVLSVPRTLH (125 aa).

In Xanthomonas axonopodis pv. citri (strain 306), this protein is Protein ApaG.